A 274-amino-acid polypeptide reads, in one-letter code: 2,3,4,5-tetrahydropyridine-2,6-dicarboxylate N-succinyltransferase (274 aa).

Residues R104 and D141 each coordinate substrate.

Belongs to the transferase hexapeptide repeat family. In terms of assembly, homotrimer.

Its subcellular location is the cytoplasm. The enzyme catalyses (S)-2,3,4,5-tetrahydrodipicolinate + succinyl-CoA + H2O = (S)-2-succinylamino-6-oxoheptanedioate + CoA. Its pathway is amino-acid biosynthesis; L-lysine biosynthesis via DAP pathway; LL-2,6-diaminopimelate from (S)-tetrahydrodipicolinate (succinylase route): step 1/3. The chain is 2,3,4,5-tetrahydropyridine-2,6-dicarboxylate N-succinyltransferase from Citrobacter koseri (strain ATCC BAA-895 / CDC 4225-83 / SGSC4696).